Here is a 373-residue protein sequence, read N- to C-terminus: Glutamate 5-kinase (373 aa).

An ATP-binding site is contributed by lysine 15. Substrate is bound by residues serine 55, aspartate 142, and asparagine 154. Residues 174-175 and 216-222 each bind ATP; these read TD and TGGMVTK. The 79-residue stretch at 281-359 folds into the PUA domain; it reads SGRVIVDDGA…GEIEAILGYK (79 aa).

This sequence belongs to the glutamate 5-kinase family.

It localises to the cytoplasm. It carries out the reaction L-glutamate + ATP = L-glutamyl 5-phosphate + ADP. Its pathway is amino-acid biosynthesis; L-proline biosynthesis; L-glutamate 5-semialdehyde from L-glutamate: step 1/2. Functionally, catalyzes the transfer of a phosphate group to glutamate to form L-glutamate 5-phosphate. The protein is Glutamate 5-kinase of Geobacter metallireducens (strain ATCC 53774 / DSM 7210 / GS-15).